Here is a 381-residue protein sequence, read N- to C-terminus: Probable tRNA sulfurtransferase (381 aa).

The THUMP domain occupies 57 to 160 (EKGIEKLKSV…NKAYVYSKKI (104 aa)). Residues 177 to 178 (ML), 202 to 203 (YF), R259, G281, and Q290 each bind ATP.

It belongs to the ThiI family.

It localises to the cytoplasm. It catalyses the reaction [ThiI sulfur-carrier protein]-S-sulfanyl-L-cysteine + a uridine in tRNA + 2 reduced [2Fe-2S]-[ferredoxin] + ATP + H(+) = [ThiI sulfur-carrier protein]-L-cysteine + a 4-thiouridine in tRNA + 2 oxidized [2Fe-2S]-[ferredoxin] + AMP + diphosphate. The catalysed reaction is [ThiS sulfur-carrier protein]-C-terminal Gly-Gly-AMP + S-sulfanyl-L-cysteinyl-[cysteine desulfurase] + AH2 = [ThiS sulfur-carrier protein]-C-terminal-Gly-aminoethanethioate + L-cysteinyl-[cysteine desulfurase] + A + AMP + 2 H(+). It functions in the pathway cofactor biosynthesis; thiamine diphosphate biosynthesis. In terms of biological role, catalyzes the ATP-dependent transfer of a sulfur to tRNA to produce 4-thiouridine in position 8 of tRNAs, which functions as a near-UV photosensor. Also catalyzes the transfer of sulfur to the sulfur carrier protein ThiS, forming ThiS-thiocarboxylate. This is a step in the synthesis of thiazole, in the thiamine biosynthesis pathway. The sulfur is donated as persulfide by IscS. The protein is Probable tRNA sulfurtransferase of Clostridium kluyveri (strain NBRC 12016).